The chain runs to 395 residues: Putative phosphatidate cytidylyltransferase (395 aa).

9 helical membrane passes run 13-33 (STVFVVLLIVFCFFLMFSAFA), 78-98 (FAFGLVIVLFISVIAVLMNWE), 115-135 (SLLSGIMVSGGMIPTFFVIYF), 144-164 (WIWTASFAGMIVFLWAVYMIS), 177-197 (IYSLGAVICFIACIGTIYFSV), 201-221 (WTTIFLLIAIGVCTDTFAYLF), 242-262 (AFFGVTGTVLTISIICVLYSI), 306-326 (FYIYWWVSTLALIFTASIFAI), and 358-378 (FDSSSFLISFFFIYHVIAGIS).

The protein belongs to the CDS family.

It is found in the cell membrane. The enzyme catalyses a 1,2-diacyl-sn-glycero-3-phosphate + CTP + H(+) = a CDP-1,2-diacyl-sn-glycerol + diphosphate. Its pathway is phospholipid metabolism; CDP-diacylglycerol biosynthesis; CDP-diacylglycerol from sn-glycerol 3-phosphate: step 3/3. The chain is Putative phosphatidate cytidylyltransferase (cdsA) from Mycoplasma pneumoniae (strain ATCC 29342 / M129 / Subtype 1) (Mycoplasmoides pneumoniae).